Consider the following 166-residue polypeptide: Eukaryotic translation initiation factor 5A (166 aa).

Residue K52 is modified to Hypusine. The interval 99-125 (DREDPSKPAHLSLMDDEGETRDNLDMP) is disordered.

Belongs to the eIF-5A family. Lys-52 undergoes hypusination, a unique post-translational modification that consists in the addition of a butylamino group from spermidine to lysine side chain, leading to the formation of the unusual amino acid hypusine. eIF-5As are the only known proteins to undergo this modification, which is essential for their function. Hypusination is mediated by the consecutive action of deoxyhypusine synthase DHSc and deoxyhypusine hydroxylase DOHH.

The protein localises to the cytoplasm. Functionally, translation factor that promotes translation elongation and termination, particularly upon ribosome stalling at specific amino acid sequence contexts. Binds between the exit (E) and peptidyl (P) site of the ribosome and promotes rescue of stalled ribosome: specifically required for efficient translation of polyproline-containing peptides as well as other motifs that stall the ribosome. Acts as a ribosome quality control (RQC) cofactor by joining the RQC complex to facilitate peptidyl transfer during CAT tailing step. Required for cell growth during both bloodstream (BF) and insect procyclic (PF) life cycle stages and for survival of the bloodstream form. The sequence is that of Eukaryotic translation initiation factor 5A from Trypanosoma brucei brucei (strain 927/4 GUTat10.1).